The primary structure comprises 297 residues: HTH-type transcriptional regulator ArgP (297 aa).

Residues Pro4–Thr60 enclose the HTH lysR-type domain. The H-T-H motif DNA-binding region spans Phe21–Lys40.

The protein belongs to the LysR transcriptional regulatory family. Homodimer.

Functionally, controls the transcription of genes involved in arginine and lysine metabolism. The protein is HTH-type transcriptional regulator ArgP of Klebsiella pneumoniae subsp. pneumoniae (strain ATCC 700721 / MGH 78578).